The primary structure comprises 776 residues: Disintegrin and metalloproteinase domain-containing protein 28 (776 aa).

An N-terminal signal peptide occupies residues 1–19 (MLQALLTVSLLLSPVPVSA). The propeptide occupies 20 to 193 (IKELPGVKKY…IARPATRLVK (174 aa)). A Cysteine switch motif is present at residues 168 to 175 (STCGTDGV). Cysteine 170 serves as a coordination point for Zn(2+). Topologically, residues 194–666 (LNDGKVQKHE…CDDSSVVFYF (473 aa)) are extracellular. The region spanning 204–400 (KYIEYYLVLD…KLSNCLFNAP (197 aa)) is the Peptidase M12B domain. Asparagine 268 and asparagine 275 each carry an N-linked (GlcNAc...) asparagine glycan. 4 disulfides stabilise this stretch: cysteine 315-cysteine 395, cysteine 355-cysteine 379, cysteine 357-cysteine 362, and cysteine 466-cysteine 486. Histidine 340 is a binding site for Zn(2+). The active site involves glutamate 341. Positions 344 and 350 each coordinate Zn(2+). Asparagine 352 carries N-linked (GlcNAc...) asparagine glycosylation. One can recognise a Disintegrin domain in the interval 408–494 (TPICGNQMVE…NCPDDRFRAN (87 aa)). N-linked (GlcNAc...) asparagine glycans are attached at residues asparagine 558, asparagine 603, and asparagine 629. The EGF-like domain occupies 626-658 (KSTNCSSKCKGHAVCDHELQCQCEEGWSPPDCD). 3 cysteine pairs are disulfide-bonded: cysteine 630/cysteine 640, cysteine 634/cysteine 646, and cysteine 648/cysteine 657. Residues 667 to 687 (SIVVAVLFPVAVISLVVAIVI) form a helical membrane-spanning segment. At 688–776 (RQQSSREKQK…SSFLDSNPKA (89 aa)) the chain is on the cytoplasmic side. A compositionally biased stretch (basic and acidic residues) spans 691 to 701 (SSREKQKKDQR). Disordered regions lie at residues 691 to 728 (SSREKQKKDQRPLSTTGTRPHKQKRKPQMVKAVQPQEM) and 746 to 776 (PASFLISKPDFSPPPIPAPRSSSFLDSNPKA). Over residues 709 to 718 (RPHKQKRKPQ) the composition is skewed to basic residues.

It depends on Zn(2+) as a cofactor. Pro-domain removal and maturation may be, at least in part, autocatalytic. As to expression, expressed at high levels in epididymis and at lower levels in lung.

It localises to the membrane. May play a role in the adhesive and proteolytic events that occur during lymphocyte emigration or may function in ectodomain shedding of lymphocyte surface target proteins, such as FASL and CD40L. May be involved in sperm maturation. This chain is Disintegrin and metalloproteinase domain-containing protein 28 (ADAM28), found in Macaca fascicularis (Crab-eating macaque).